The primary structure comprises 467 residues: Glutamate--tRNA ligase (467 aa).

Positions 15–25 match the 'HIGH' region motif; it reads PSPTGYLHVGG. A 'KMSKS' region motif is present at residues 249 to 253; that stretch reads KLSKR. Residue lysine 252 coordinates ATP.

The protein belongs to the class-I aminoacyl-tRNA synthetase family. Glutamate--tRNA ligase type 1 subfamily. Monomer.

The protein localises to the cytoplasm. The enzyme catalyses tRNA(Glu) + L-glutamate + ATP = L-glutamyl-tRNA(Glu) + AMP + diphosphate. Its function is as follows. Catalyzes the attachment of glutamate to tRNA(Glu) in a two-step reaction: glutamate is first activated by ATP to form Glu-AMP and then transferred to the acceptor end of tRNA(Glu). In Coprothermobacter proteolyticus (strain ATCC 35245 / DSM 5265 / OCM 4 / BT), this protein is Glutamate--tRNA ligase.